We begin with the raw amino-acid sequence, 516 residues long: MSNFYNNNPRRNTFRLTERIKKKPYQTLIVFILIFLFLYVFGPFGEKKSNNNNNNHPVSKTSSFTESLYTKFQTETFAYRANGDLKKYDISIITQFTVDRFDRIAMMADKWRAPISAAVYITSFKDIDEVFKLVRNSFAVTEFVDLHFLFANKTRYPVNNLRNLALRNARTEWCLLLDVDFISPLGMYDYLHSTLEKLDTSNNNNNNNNNNNNNNNNNNNNNNNNNNNNNNNENNDNDNGNNNNNNDNEKNFKKKQEDLKIDPNDFEGDLKAIEKLKRNGEKLYVKNLKKVLDGSENNLGKNINFNNNNNDNNNKDDGGGGGYYLNSDNSNINNNNKIAFVIPSFSSSISRFDFPDNKKDLLDFIKQDLIKEINSGVCPKCHGPTNYSRWYLSSEPYLVQYKWIYEPFLLYNRSQIHDYDERLKGYGFDKNSHTFGMAAAGFDFVVLPDAWIIHMNHVSKPWEGADTFNEQMFDCLSIVCESILPDAKSKNGYDPNAKLFNEPLKNNDNCLTREHW.

Residues 1–24 (MSNFYNNNPRRNTFRLTERIKKKP) are Cytoplasmic-facing. Residues 25-45 (YQTLIVFILIFLFLYVFGPFG) form a helical; Signal-anchor for type II membrane protein membrane-spanning segment. Over 46-516 (EKKSNNNNNN…NDNCLTREHW (471 aa)) the chain is Extracellular. Asparagine 152 carries an N-linked (GlcNAc...) asparagine glycan. Residues 199–250 (DTSNNNNNNNNNNNNNNNNNNNNNNNNNNNNNNNENNDNDNGNNNNNNDNEK) form a disordered region. Low complexity predominate over residues 202–246 (NNNNNNNNNNNNNNNNNNNNNNNNNNNNNNNENNDNDNGNNNNNN). Residues asparagine 386 and asparagine 412 are each glycosylated (N-linked (GlcNAc...) asparagine).

This sequence belongs to the glycosyltransferase 8 family. Highly divergent.

The protein resides in the membrane. Functionally, may have a role in modulating cell adhesion and glycosylation. Essential for development. The sequence is that of Glycosyltransferase-like protein gnt15 (gnt15) from Dictyostelium discoideum (Social amoeba).